The following is a 95-amino-acid chain: Aspartyl/glutamyl-tRNA(Asn/Gln) amidotransferase subunit C (95 aa).

The protein belongs to the GatC family. As to quaternary structure, heterotrimer of A, B and C subunits.

It catalyses the reaction L-glutamyl-tRNA(Gln) + L-glutamine + ATP + H2O = L-glutaminyl-tRNA(Gln) + L-glutamate + ADP + phosphate + H(+). It carries out the reaction L-aspartyl-tRNA(Asn) + L-glutamine + ATP + H2O = L-asparaginyl-tRNA(Asn) + L-glutamate + ADP + phosphate + 2 H(+). Its function is as follows. Allows the formation of correctly charged Asn-tRNA(Asn) or Gln-tRNA(Gln) through the transamidation of misacylated Asp-tRNA(Asn) or Glu-tRNA(Gln) in organisms which lack either or both of asparaginyl-tRNA or glutaminyl-tRNA synthetases. The reaction takes place in the presence of glutamine and ATP through an activated phospho-Asp-tRNA(Asn) or phospho-Glu-tRNA(Gln). The polypeptide is Aspartyl/glutamyl-tRNA(Asn/Gln) amidotransferase subunit C (Sinorhizobium fredii (strain NBRC 101917 / NGR234)).